The following is a 2494-amino-acid chain: Nuclear receptor corepressor 1 (2494 aa).

The span at 1 to 33 (MSSSGYPPNQGAFSTEQGRYSSHPVQYTFPSSR) shows a compositional bias: polar residues. Disordered stretches follow at residues 1–38 (MSSS…QQEF), 53–106 (LLQQ…PRLD), 134–170 (SEVK…KLSK), and 198–222 (QQQL…PVEQ). Residues 71–82 (PVSDRPQDRRQG) show a composition bias toward basic and acidic residues. The span at 83–92 (YEQQYHSVTQ) shows a compositional bias: polar residues. 3 stretches are compositionally biased toward basic and acidic residues: residues 93–106 (NEHE…PRLD), 134–148 (SEVK…KHET), and 204–213 (EAAKPPEPEK). Positions 154 to 304 (SGQPGEEQEA…REQNICQRYD (151 aa)) are interaction with tbl1xr1. A coiled-coil region spans residues 168–208 (LSKEELIQSMDRVDREIAKVEQQILKLKKKQQQLEEEAAKP). An SANT 1 domain is found at 427–478 (QFMNVWTDHEKEIFKEKFVQHPKNFGLIASYLERKTVSDCVLYYYLTKKNEN). Disordered regions lie at residues 488-638 (PKRR…VEHG), 671-913 (NLLQ…LDSK), 981-1007 (RQRQ…PNMD), 1081-1124 (GARL…GTPG), 1413-1434 (IHEI…ESSR), 1488-1585 (MGER…TQRE), 1745-1845 (LAFP…QESI), and 1912-1987 (EVVK…AHTK). Basic and acidic residues-rich tracts occupy residues 502–525 (AQEE…KEEE) and 535–548 (KEEL…RTDA). Residues 502-549 (AQEEKEIEKVEEEKAERNDKKEEERREEEEKEEKEELRDGTKDRTDAI) adopt a coiled-coil conformation. Positions 582–616 (ASEAAAAANAASTATTAPATTTSTTATTTTAALVP) are enriched in low complexity. Positions 617–629 (VAPPPEEPTPPPT) are enriched in pro residues. An SANT 2 domain is found at 622–668 (EEPTPPPTQEQSLVEHGRNWGAIAKMVGSKSESQCKNFYFNYKRRHN). Residues 692 to 702 (QCESVASTVSA) are compositionally biased toward polar residues. A coiled-coil region spans residues 698–726 (STVSAQEDEENEASNEEENAEDSEGAENS). Over residues 703-722 (QEDEENEASNEEENAEDSEG) the composition is skewed to acidic residues. A compositionally biased stretch (low complexity) spans 723–741 (AENSSDTESAPSPSPAEAA). The span at 766–779 (ASKSVSDSSPTPTV) shows a compositional bias: polar residues. A compositionally biased stretch (basic and acidic residues) spans 829-864 (AEPDEVESKPSESAEVKIEEDTKDQDMERLMDRAEA). Polar residues-rich tracts occupy residues 881-892 (ESQSDNDSSATC), 993-1004 (MSASPGNMSKSP), and 1104-1124 (ATSS…GTPG). Residues 1488-1504 (MGERSKYEDTKSSEAIR) show a composition bias toward basic and acidic residues. Residues 1508–1519 (TSVVSSGPSVLR) are compositionally biased toward polar residues. A compositionally biased stretch (low complexity) spans 1548–1561 (PSPMSRSSPMARSA). A coiled-coil region spans residues 1771–1810 (VSAERERERERDRERDREREKEQRERERDRERERERLAAA). Basic and acidic residues predominate over residues 1773-1807 (AERERERERDRERDREREKEQRERERDRERERERL). The segment covering 1835–1845 (PSPSVRAQESI) has biased composition (polar residues). The segment covering 1914 to 1935 (VKPKEMKHDPARSEESLSRRNV) has biased composition (basic and acidic residues). Low complexity predominate over residues 1953-1972 (QSPYTSSSFSGSKSQGQPSP). A compositionally biased stretch (basic and acidic residues) spans 1978-1987 (AGKEKTAHTK). A CORNR box 1 motif is present at residues 2008–2012 (IDVII). The segment at 2018–2105 (SDKDGRDRNS…PSPQQTIPGH (88 aa)) is disordered. Residues 2027–2036 (SQSSDSSSSH) show a composition bias toward low complexity. Residues 2039–2048 (HRYDAPRDTI) show a composition bias toward basic and acidic residues. The segment covering 2088–2102 (RYRQQQESPSPQQTI) has biased composition (polar residues). Positions 2119-2123 (ICQII) match the CORNR box 2 motif. The span at 2135–2177 (QALQQPPASTFQSTNPSSTPVRTKASSRFSPESQVQPVHNQRP) shows a compositional bias: polar residues. The tract at residues 2135-2216 (QALQQPPAST…YEPISPPQAP (82 aa)) is disordered. The segment covering 2186-2205 (VLDRPRGRPGKSPDRGHISE) has biased composition (basic and acidic residues). A CORNR box 3 motif is present at residues 2322 to 2326 (LEDII). Disordered regions lie at residues 2346-2413 (GVAQ…SVHS) and 2446-2494 (MLNS…DSDE). The span at 2376–2390 (HKQKLISKYGSRKTK) shows a compositional bias: basic residues. Polar residues-rich tracts occupy residues 2446–2472 (MLNS…QQSR) and 2485–2494 (QYETLSDSDE).

This sequence belongs to the N-CoR nuclear receptor corepressors family. As to quaternary structure, forms a large corepressor complex that contains sin3a/b, histone deacetylases hdac1 and hdac2, rbbp4 and possibly rbbp7. Interacts with the thyroid receptor (TR, composed of rxra and thrb) and the retinoid acid receptor (RAR, composed of rxra and rara) in the absence of ligand. Interacts with tbl1xr1. Interacts with zbtb33/kaiso.

It is found in the nucleus. Mediates transcriptional repression by certain nuclear receptors. Participates in complexes which promote histone deacetylation and the formation of repressive chromatin structures which may impede access by the basal transcription machinery. In association with hdac3, may play a role in the regulation of the circadian clock. This is Nuclear receptor corepressor 1 (ncor1) from Xenopus tropicalis (Western clawed frog).